Here is a 586-residue protein sequence, read N- to C-terminus: Phosphomethylpyrimidine synthase (586 aa).

Residues 1 to 33 form a disordered region; that stretch reads MKQSVSAEQIELKSSLPGSKKVYVDGPREGMKV. The span at 22 to 33 shows a compositional bias: basic and acidic residues; the sequence is VYVDGPREGMKV. Substrate-binding positions include Asn-193, Met-222, Tyr-251, His-287, 307–309, 348–351, and Glu-387; these read SRG and DGLR. Residue His-391 participates in Zn(2+) binding. Tyr-414 is a substrate binding site. Zn(2+) is bound at residue His-455. [4Fe-4S] cluster contacts are provided by Cys-535, Cys-538, and Cys-543.

Belongs to the ThiC family. [4Fe-4S] cluster serves as cofactor.

The enzyme catalyses 5-amino-1-(5-phospho-beta-D-ribosyl)imidazole + S-adenosyl-L-methionine = 4-amino-2-methyl-5-(phosphooxymethyl)pyrimidine + CO + 5'-deoxyadenosine + formate + L-methionine + 3 H(+). Its pathway is cofactor biosynthesis; thiamine diphosphate biosynthesis. Functionally, catalyzes the synthesis of the hydroxymethylpyrimidine phosphate (HMP-P) moiety of thiamine from aminoimidazole ribotide (AIR) in a radical S-adenosyl-L-methionine (SAM)-dependent reaction. The sequence is that of Phosphomethylpyrimidine synthase from Bacillus cereus (strain G9842).